The chain runs to 72 residues: uncharacterized protein (72 aa).

This is an uncharacterized protein from Rickettsia conorii (strain ATCC VR-613 / Malish 7).